A 229-amino-acid chain; its full sequence is Ribonuclease 3 (229 aa).

Positions 5–127 (LSRLERQLGY…LIGAIYLDAG (123 aa)) constitute an RNase III domain. E40 contributes to the Mg(2+) binding site. D44 is an active-site residue. Residues D113 and E116 each contribute to the Mg(2+) site. The active site involves E116. A DRBM domain is found at 154–224 (DPKTRLQEFL…AAAALIALGV (71 aa)).

Belongs to the ribonuclease III family. Homodimer. Mg(2+) is required as a cofactor.

The protein resides in the cytoplasm. The catalysed reaction is Endonucleolytic cleavage to 5'-phosphomonoester.. In terms of biological role, digests double-stranded RNA. Involved in the processing of primary rRNA transcript to yield the immediate precursors to the large and small rRNAs (23S and 16S). Processes some mRNAs, and tRNAs when they are encoded in the rRNA operon. Processes pre-crRNA and tracrRNA of type II CRISPR loci if present in the organism. The chain is Ribonuclease 3 from Pseudomonas fluorescens (strain Pf0-1).